A 505-amino-acid polypeptide reads, in one-letter code: ATP synthase subunit alpha (505 aa).

171–178 lines the ATP pocket; it reads GDRQTGKT.

Belongs to the ATPase alpha/beta chains family. As to quaternary structure, F-type ATPases have 2 components, CF(1) - the catalytic core - and CF(0) - the membrane proton channel. CF(1) has five subunits: alpha(3), beta(3), gamma(1), delta(1), epsilon(1). CF(0) has three main subunits: a(1), b(2) and c(9-12). The alpha and beta chains form an alternating ring which encloses part of the gamma chain. CF(1) is attached to CF(0) by a central stalk formed by the gamma and epsilon chains, while a peripheral stalk is formed by the delta and b chains.

Its subcellular location is the cell inner membrane. The catalysed reaction is ATP + H2O + 4 H(+)(in) = ADP + phosphate + 5 H(+)(out). Its function is as follows. Produces ATP from ADP in the presence of a proton gradient across the membrane. The alpha chain is a regulatory subunit. The polypeptide is ATP synthase subunit alpha (Campylobacter concisus (strain 13826)).